Consider the following 356-residue polypeptide: Protein ATP1B4 (356 aa).

Over 1-109 the chain is Nuclear; the sequence is MRRQLRSRRA…SLARTGQSRS (109 aa). The disordered stretch occupies residues 32-77; that stretch reads LADEEEEAEEEAQVMMVPGLEEEEEEEEGKEEEEEREEEEGQGQST. Composition is skewed to acidic residues over residues 33 to 43 and 51 to 72; these read ADEEEEAEEEA and LEEE…EEEG. A helical; Signal-anchor for type II membrane protein membrane pass occupies residues 110–130; it reads LILVIYFFFYASLAAVITLFI. At 131–356 the chain is on the perinuclear space side; the sequence is YMLFLAISPY…RIIFTLNIET (226 aa).

This sequence belongs to the X(+)/potassium ATPases subunit beta family. In terms of assembly, does not associate with known Na,K-ATPase alpha-subunits. Associates with a SMAD7-transcriptional complex. Interacts with SNW1 and TOR1AIP1. In terms of tissue distribution, expressed in perinatal myocytes (at protein level). Expressed during postnatal development in skeletal muscle and heart.

It localises to the nucleus inner membrane. Its function is as follows. May act as a transcriptional coregulator during muscle development through its interaction with SNW1. Has lost its ancestral function as a Na,K-ATPase beta-subunit. The sequence is that of Protein ATP1B4 (Atp1b4) from Rattus norvegicus (Rat).